Here is a 136-residue protein sequence, read N- to C-terminus: Large ribosomal subunit protein eL27 (136 aa).

In terms of domain architecture, KOW spans 5-40 (MKPGKVVMVLAGRYAGRKAVIVKNIDDGTADRPYSH).

Belongs to the eukaryotic ribosomal protein eL27 family. In terms of assembly, component of the large ribosomal subunit.

Its subcellular location is the cytoplasm. The protein resides in the cytosol. It localises to the rough endoplasmic reticulum. Its function is as follows. Component of the large ribosomal subunit. The chain is Large ribosomal subunit protein eL27 (rpl27) from Danio rerio (Zebrafish).